A 499-amino-acid polypeptide reads, in one-letter code: MQDQYILALDQGTTSSRAMLFDRLGNIVSTAQKEFQQIYPRPGWVEHDPQEIWSTQAGVAAEAVTRAGMNGTSIAAIGITNQRETTIVWDRETGHPIYNAIVWQDRRTADFCDQLKEQGLEEKVRAKTGLPIDSYFSATKIRWILDNVEGAREKARQGRLAFGTVDSWLVWNFTKGGLHVTDVTNASRTMLFNIHSLKWDDELLEALDIPRSMLPEVRASSEVYGPTKTTVFASKIPLAGIAGDQHAALFGQMCTESGMVKNTYGTGCFLVMNTGDKPIESKNNLVTTIAWQIGDQINYALEGSIFIGGAVVQWLRDGLGIIKNAAEIETLARSVSHSDGVYLVPAFAGLGAPHWNARARGTLFGVTRGTSSAHIARAALDSIAYQSLDVLKAMEADSGIRIGELRVDGGACANNLLMQFQADILGVDAVRPKVAETTALGAAYLAGLAVGYWKDVDELQSQWKLDRRFTPALPHAEVKQCLDGWQRAIRAAKAWADTP.

Residue threonine 13 participates in ADP binding. ATP is bound by residues threonine 13, threonine 14, and serine 15. Threonine 13 serves as a coordination point for sn-glycerol 3-phosphate. Position 17 (arginine 17) interacts with ADP. Positions 83, 84, 135, and 244 each coordinate sn-glycerol 3-phosphate. Residues arginine 83, glutamate 84, tyrosine 135, aspartate 244, and glutamine 245 each contribute to the glycerol site. ADP-binding residues include threonine 266 and glycine 309. 4 residues coordinate ATP: threonine 266, glycine 309, glutamine 313, and glycine 410. Positions 410 and 414 each coordinate ADP.

Belongs to the FGGY kinase family.

It catalyses the reaction glycerol + ATP = sn-glycerol 3-phosphate + ADP + H(+). It functions in the pathway polyol metabolism; glycerol degradation via glycerol kinase pathway; sn-glycerol 3-phosphate from glycerol: step 1/1. Inhibited by fructose 1,6-bisphosphate (FBP). Functionally, key enzyme in the regulation of glycerol uptake and metabolism. Catalyzes the phosphorylation of glycerol to yield sn-glycerol 3-phosphate. This Paraburkholderia phytofirmans (strain DSM 17436 / LMG 22146 / PsJN) (Burkholderia phytofirmans) protein is Glycerol kinase.